Here is a 476-residue protein sequence, read N- to C-terminus: Glutamate--tRNA ligase (476 aa).

Residues 9-19 carry the 'HIGH' region motif; it reads PSPTGTLHIGT. Positions 248–252 match the 'KMSKS' region motif; that stretch reads KLSKR. K251 lines the ATP pocket.

This sequence belongs to the class-I aminoacyl-tRNA synthetase family. Glutamate--tRNA ligase type 1 subfamily. Monomer.

The protein localises to the cytoplasm. It carries out the reaction tRNA(Glu) + L-glutamate + ATP = L-glutamyl-tRNA(Glu) + AMP + diphosphate. Its function is as follows. Catalyzes the attachment of glutamate to tRNA(Glu) in a two-step reaction: glutamate is first activated by ATP to form Glu-AMP and then transferred to the acceptor end of tRNA(Glu). This is Glutamate--tRNA ligase from Prochlorococcus marinus (strain MIT 9303).